The primary structure comprises 386 residues: MSKSWISKRESKLLYILLTTTELYLKTGQPVGSKTLKEYECSNLSTATIRNYFAELEAEGFLKKNHVSGGRIPTDLAFRYYVDHRADFLQDDLPETTIHLLNQLPKESQNIVKDLQKASELLGEALQLPTCFSSPRFENDSVTNIQLSLVDEQRVVVILSTEFGQIFTDTLWLAETSNYASLKRIETFLQNYLRKQPPSETLSQKEEDLGMTLYNEVVVRYLTRYCNFSEEDLYQTGLSKLLKYDAFKDPDMLALGLSFFESRCHMCKLLDIGMHRDRPTAFIGSELSDIFGTPNPHCAVITTPYYMNRTPLGAFGVLGPINLPYREIYKTLTIFADKVKESLTQSFYKFKLSFRRPCPSDPKLSKEPTLLARYSSIKLLPPKETS.

Belongs to the HrcA family.

Functionally, negative regulator of class I heat shock genes (grpE-dnaK-dnaJ and groELS operons). Prevents heat-shock induction of these operons. In Chlamydia abortus (strain DSM 27085 / S26/3) (Chlamydophila abortus), this protein is Heat-inducible transcription repressor HrcA.